The sequence spans 201 residues: ATP-dependent Clp protease proteolytic subunit (201 aa).

The active-site Nucleophile is Ser-98. The active site involves His-123.

It belongs to the peptidase S14 family. As to quaternary structure, fourteen ClpP subunits assemble into 2 heptameric rings which stack back to back to give a disk-like structure with a central cavity, resembling the structure of eukaryotic proteasomes.

Its subcellular location is the cytoplasm. It carries out the reaction Hydrolysis of proteins to small peptides in the presence of ATP and magnesium. alpha-casein is the usual test substrate. In the absence of ATP, only oligopeptides shorter than five residues are hydrolyzed (such as succinyl-Leu-Tyr-|-NHMec, and Leu-Tyr-Leu-|-Tyr-Trp, in which cleavage of the -Tyr-|-Leu- and -Tyr-|-Trp bonds also occurs).. In terms of biological role, cleaves peptides in various proteins in a process that requires ATP hydrolysis. Has a chymotrypsin-like activity. Plays a major role in the degradation of misfolded proteins. This is ATP-dependent Clp protease proteolytic subunit from Rickettsia conorii (strain ATCC VR-613 / Malish 7).